Consider the following 354-residue polypeptide: Probable butyrate kinase (354 aa).

The protein belongs to the acetokinase family.

Its subcellular location is the cytoplasm. It catalyses the reaction butanoate + ATP = butanoyl phosphate + ADP. The sequence is that of Probable butyrate kinase from Phocaeicola vulgatus (strain ATCC 8482 / DSM 1447 / JCM 5826 / CCUG 4940 / NBRC 14291 / NCTC 11154) (Bacteroides vulgatus).